The sequence spans 245 residues: MILFPAIDLKNGQCVRLEQGDMDRATVFNLDPAAQAASFAAQGFEYLHVVDLDGAFAGKPMNAQAVEAMLKVVKMPVQLGGGIRDLATIEAWLGKGVTRVIIGTAAVRDPALVKEAAKQFPGRVAVGLDARDGKVAVQGWAETSTVTALEIAQRFEDAGVAAIIFTDIARDGLLKGLNLDATIALAEAISIPVIASGGFASIDDVKALLEPRAKKLEGAIVGRALYDGRLDPAEALALIGRAAAA.

Aspartate 8 (proton acceptor) is an active-site residue. Aspartate 129 functions as the Proton donor in the catalytic mechanism.

It belongs to the HisA/HisF family.

It localises to the cytoplasm. The catalysed reaction is 1-(5-phospho-beta-D-ribosyl)-5-[(5-phospho-beta-D-ribosylamino)methylideneamino]imidazole-4-carboxamide = 5-[(5-phospho-1-deoxy-D-ribulos-1-ylimino)methylamino]-1-(5-phospho-beta-D-ribosyl)imidazole-4-carboxamide. It functions in the pathway amino-acid biosynthesis; L-histidine biosynthesis; L-histidine from 5-phospho-alpha-D-ribose 1-diphosphate: step 4/9. The protein is 1-(5-phosphoribosyl)-5-[(5-phosphoribosylamino)methylideneamino] imidazole-4-carboxamide isomerase of Rhodopseudomonas palustris (strain BisA53).